We begin with the raw amino-acid sequence, 940 residues long: Valine--tRNA ligase (940 aa).

The short motif at 47–57 is the 'HIGH' region element; sequence PNVTGVLHMGH. The 'KMSKS' region signature appears at 564–568; the sequence is KLSKS. Lysine 567 lines the ATP pocket. Residues 873–905 are a coiled coil; the sequence is EEHLLKEKGRLEKERVRLERAVENLERLLGDES.

This sequence belongs to the class-I aminoacyl-tRNA synthetase family. ValS type 1 subfamily. As to quaternary structure, monomer.

The protein localises to the cytoplasm. It carries out the reaction tRNA(Val) + L-valine + ATP = L-valyl-tRNA(Val) + AMP + diphosphate. Catalyzes the attachment of valine to tRNA(Val). As ValRS can inadvertently accommodate and process structurally similar amino acids such as threonine, to avoid such errors, it has a 'posttransfer' editing activity that hydrolyzes mischarged Thr-tRNA(Val) in a tRNA-dependent manner. This chain is Valine--tRNA ligase, found in Chlamydia pneumoniae (Chlamydophila pneumoniae).